The following is a 366-amino-acid chain: S-adenosylmethionine:tRNA ribosyltransferase-isomerase (366 aa).

Belongs to the QueA family. Monomer.

The protein resides in the cytoplasm. The enzyme catalyses 7-aminomethyl-7-carbaguanosine(34) in tRNA + S-adenosyl-L-methionine = epoxyqueuosine(34) in tRNA + adenine + L-methionine + 2 H(+). It functions in the pathway tRNA modification; tRNA-queuosine biosynthesis. Transfers and isomerizes the ribose moiety from AdoMet to the 7-aminomethyl group of 7-deazaguanine (preQ1-tRNA) to give epoxyqueuosine (oQ-tRNA). The polypeptide is S-adenosylmethionine:tRNA ribosyltransferase-isomerase (Bradyrhizobium diazoefficiens (strain JCM 10833 / BCRC 13528 / IAM 13628 / NBRC 14792 / USDA 110)).